Here is a 59-residue protein sequence, read N- to C-terminus: Small, acid-soluble spore protein C1 (59 aa).

It belongs to the alpha/beta-type SASP family. Post-translationally, SASP are degraded in the first minutes of spore germination and provide amino acids for both new protein synthesis and metabolism.

Its function is as follows. SASP are bound to spore DNA. They are double-stranded DNA-binding proteins that cause DNA to change to an a-like conformation. They protect the DNA backbone from chemical and enzymatic cleavage and are thus involved in dormant spore's high resistance to UV light. The polypeptide is Small, acid-soluble spore protein C1 (sspC1) (Clostridium perfringens (strain 13 / Type A)).